The chain runs to 765 residues: Ubiquitin-like modifier-activating enzyme atg7 (765 aa).

The short motif at 436–441 (GAGTLG) is the GXGXXG motif element. The active-site Glycyl thioester intermediate is the C616. Disordered stretches follow at residues 646-670 (AAPA…PPNH) and 744-765 (AAND…PELL). A homodimerization region spans residues 721–760 (ALTEKDYITELSGLAEVQRKAEAAANDVEWDSDEEGMEDE). Positions 748–765 (VEWDSDEEGMEDEEPELL) are enriched in acidic residues.

The protein belongs to the ATG7 family. In terms of assembly, homodimer. Interacts with ATG8 through a thioester bond between Cys-616 and the C-terminal Gly of ATG8 and with ATG12 through a thioester bond between Cys-616 and the C-terminal Gly of ATG12. Also interacts with ATG3.

The protein resides in the cytoplasm. The protein localises to the preautophagosomal structure. In terms of biological role, E1-like activating enzyme involved in the 2 ubiquitin-like systems required for cytoplasm to vacuole transport (Cvt) and autophagy. Activates ATG12 for its conjugation with ATG5 and ATG8 for its conjugation with phosphatidylethanolamine. Both systems are needed for the ATG8 association to Cvt vesicles and autophagosomes membranes. Autophagy is essential for maintenance of amino acid levels and protein synthesis under nitrogen starvation. Required for selective autophagic degradation of the nucleus (nucleophagy) as well as for mitophagy which contributes to regulate mitochondrial quantity and quality by eliminating the mitochondria to a basal level to fulfill cellular energy requirements and preventing excess ROS production. Required for normal mycelial growth and conidiogenesis, and regulates sclerotial formation. Plays an essential role in pathogenesis. This chain is Ubiquitin-like modifier-activating enzyme atg7, found in Botryotinia fuckeliana (strain BcDW1) (Noble rot fungus).